Consider the following 190-residue polypeptide: Endoribonuclease YbeY (190 aa).

The segment at 1-25 (MSQPRPGHRPDCNGADPDSNFASMT) is disordered. Residues histidine 147, histidine 151, and histidine 157 each contribute to the Zn(2+) site.

This sequence belongs to the endoribonuclease YbeY family. Requires Zn(2+) as cofactor.

It is found in the cytoplasm. In terms of biological role, single strand-specific metallo-endoribonuclease involved in late-stage 70S ribosome quality control and in maturation of the 3' terminus of the 16S rRNA. This chain is Endoribonuclease YbeY, found in Rhodopseudomonas palustris (strain ATCC BAA-98 / CGA009).